A 147-amino-acid chain; its full sequence is Myosin-2 essential light chain (147 aa).

EF-hand domains lie at 7-42 (DQLA…LGQN), 80-115 (DTAD…LGEK), and 115-147 (KLTD…VMSG). Phosphoserine is present on Ser30. Ca(2+) is bound by residues Asp93, Asp95, Ser97, Tyr99, and Glu104.

Myosin is a hexamer of 2 heavy chains and 4 light chains.

This is Myosin-2 essential light chain (Mlc-c) from Drosophila melanogaster (Fruit fly).